The primary structure comprises 129 residues: Large ribosomal subunit protein bL19c (129 aa).

It belongs to the bacterial ribosomal protein bL19 family.

It is found in the plastid. The chain is Large ribosomal subunit protein bL19c from Prototheca wickerhamii.